Reading from the N-terminus, the 366-residue chain is Ribosomal RNA large subunit methyltransferase M (366 aa).

S-adenosyl-L-methionine is bound by residues serine 188, 221 to 224 (CPGG), aspartate 240, aspartate 260, and aspartate 277. The Proton acceptor role is filled by lysine 306.

It belongs to the class I-like SAM-binding methyltransferase superfamily. RNA methyltransferase RlmE family. RlmM subfamily. In terms of assembly, monomer.

The protein resides in the cytoplasm. It catalyses the reaction cytidine(2498) in 23S rRNA + S-adenosyl-L-methionine = 2'-O-methylcytidine(2498) in 23S rRNA + S-adenosyl-L-homocysteine + H(+). In terms of biological role, catalyzes the 2'-O-methylation at nucleotide C2498 in 23S rRNA. The chain is Ribosomal RNA large subunit methyltransferase M from Photorhabdus asymbiotica subsp. asymbiotica (strain ATCC 43949 / 3105-77) (Xenorhabdus luminescens (strain 2)).